The primary structure comprises 961 residues: DNA replication licensing factor MCM2 (961 aa).

Polar residues predominate over residues Met1–Phe17. Disordered regions lie at residues Met1–Asn81 and Ala120–Glu220. The segment covering Ser39 to Phe78 has biased composition (acidic residues). Basic and acidic residues-rich tracts occupy residues Ala120 to Gln146 and Pro166 to Asp176. Residues Gln205–Glu220 show a composition bias toward acidic residues. A C4-type zinc finger spans residues Cys380 to Cys406. Residues Ile524–Val730 enclose the MCM domain. Gly574–Ser581 is an ATP binding site. The Arginine finger motif lies at Ser706–Asp709.

This sequence belongs to the MCM family. In terms of assembly, component of the minichromosome maintenance (MCM) complex, a heterotetramer composed of MCM2, MCM3, MCM4, MCM5, MCM6 and MCM7. Interacts with CSN5. Widely expressed, with higher expression in developing tissues.

It is found in the nucleus. The enzyme catalyses ATP + H2O = ADP + phosphate + H(+). Probable component of the MCM2-7 complex (MCM complex) that may function as a DNA helicase and which is essential to undergo a single round of replication initiation and elongation per cell cycle in eukaryotic cells. Can complement the fission yeast mcm2 mutant. In Oryza sativa subsp. japonica (Rice), this protein is DNA replication licensing factor MCM2.